We begin with the raw amino-acid sequence, 352 residues long: tRNA pseudouridine synthase D (352 aa).

The active-site Nucleophile is Asp78. Positions 153–299 (GVPNYYGEQR…LDQDRRPLLL (147 aa)) constitute a TRUD domain.

Belongs to the pseudouridine synthase TruD family.

It catalyses the reaction uridine(13) in tRNA = pseudouridine(13) in tRNA. Responsible for synthesis of pseudouridine from uracil-13 in transfer RNAs. The protein is tRNA pseudouridine synthase D of Aeromonas hydrophila subsp. hydrophila (strain ATCC 7966 / DSM 30187 / BCRC 13018 / CCUG 14551 / JCM 1027 / KCTC 2358 / NCIMB 9240 / NCTC 8049).